A 371-amino-acid chain; its full sequence is MEPSLIDVRRALHRIPELGFEEYKTQTYLLDLIQSLPQDFLEVKTWKTGILVRVGGRKGEKTVAYRADMDGLPITEETGLPFVSQHEGRMHACGHDLHMTIAFGLLRHFAYHQPETHLLFIFQPAEEGPGGAKPMLDSEEFRMWWPDEIIALHIAPEYPVGTIATRKGLLFANTSELFIDLKGQGGHAAYPHLANDMVVAASHLVTQLQSVVSRNVDPLDSAVVTIGVIKGGTKQNIIAETARIEGTIRTLSIESMKKVKKRIEALVSGIEIGFSCQASIDYGSNYCQVWNDEERVARFIEYSQGREGVTFIECSEAMTGEDFGYFLEEIPGFMFWLGVDTNYGLHDARLNPNEDVLSFAVQHLIGYIETL.

D68 is a catalytic residue. The active-site Proton acceptor is E127.

It belongs to the peptidase M20A family. N-acetyldiaminopimelate deacetylase subfamily.

It carries out the reaction N-acetyl-(2S,6S)-2,6-diaminopimelate + H2O = (2S,6S)-2,6-diaminopimelate + acetate. The protein operates within amino-acid biosynthesis; L-lysine biosynthesis via DAP pathway; LL-2,6-diaminopimelate from (S)-tetrahydrodipicolinate (acetylase route): step 3/3. Its function is as follows. Catalyzes the conversion of N-acetyl-diaminopimelate to diaminopimelate and acetate. This chain is N-acetyldiaminopimelate deacetylase, found in Halalkalibacterium halodurans (strain ATCC BAA-125 / DSM 18197 / FERM 7344 / JCM 9153 / C-125) (Bacillus halodurans).